The following is a 439-amino-acid chain: Tol-Pal system protein TolB (439 aa).

An N-terminal signal peptide occupies residues 1–22 (MTKFPRWLAILVGLLFPLSALT).

Belongs to the TolB family. As to quaternary structure, the Tol-Pal system is composed of five core proteins: the inner membrane proteins TolA, TolQ and TolR, the periplasmic protein TolB and the outer membrane protein Pal. They form a network linking the inner and outer membranes and the peptidoglycan layer.

The protein localises to the periplasm. In terms of biological role, part of the Tol-Pal system, which plays a role in outer membrane invagination during cell division and is important for maintaining outer membrane integrity. This chain is Tol-Pal system protein TolB, found in Xylella fastidiosa (strain M12).